The following is a 25-amino-acid chain: Mu-conotoxin CnIIIB (25 aa).

Gln1 is modified (pyrrolidone carboxylic acid; partial). Disulfide bonds link Cys3–Cys15, Cys4–Cys21, and Cys10–Cys22.

Belongs to the conotoxin M superfamily. In terms of tissue distribution, expressed by the venom duct.

It localises to the secreted. Functionally, mu-conotoxins block voltage-gated sodium channels (Nav). This synthetic toxin blocks slightly but irreversibly tetrodotoxin-resistant VGSCs. The chain is Mu-conotoxin CnIIIB from Conus consors (Singed cone).